The primary structure comprises 334 residues: 4-hydroxy-2-methyl-3-oxo-4-farnesyl-3,4-dihydroquinoline-1-oxide ketoreductase (334 aa).

Catalysis depends on Tyr139, which acts as the Proton donor.

The protein belongs to the 3-beta-HSD family.

The enzyme catalyses aurachin B + NAD(+) + H2O = 4-hydroxy-2-methyl-3-oxo-4-[(2E,6E)-farnesyl]-3,4-dihydroquinoline 1-oxide + NADH. It carries out the reaction 3,4-dihydroxy-2-methyl-4-[(2E,6E)-farnesyl]-3,4-dihydroquinoline 1-oxide + NAD(+) = 4-hydroxy-2-methyl-3-oxo-4-[(2E,6E)-farnesyl]-3,4-dihydroquinoline 1-oxide + NADH + H(+). Functionally, ketoreductase that catalyzes the final step in the conversion of aurachin C to aurachin B. Catalyzes the reduction of 4-hydroxy-2-methyl-3-oxo-4-[(2E,6E)-farnesyl]-3,4-dihydroquinoline-1-oxide to form 3,4-dihydroxy-2-methyl-4-[(2E,6E)-farnesyl]-3,4-dihydroquinoline 1-oxide, which then undergoes a spontaneous dehydration to form aurachin B. Accepts both NADH and NADPH, but has a preference for NADH. The chain is 4-hydroxy-2-methyl-3-oxo-4-farnesyl-3,4-dihydroquinoline-1-oxide ketoreductase from Stigmatella aurantiaca.